A 266-amino-acid chain; its full sequence is NAD kinase 2 (266 aa).

The active-site Proton acceptor is the Asp51. Residues 51-52 (DG), 123-124 (NE), Arg150, Asp152, 163-168 (TGYSKS), and Ala187 each bind NAD(+).

It belongs to the NAD kinase family. Requires a divalent metal cation as cofactor.

It is found in the cytoplasm. The enzyme catalyses NAD(+) + ATP = ADP + NADP(+) + H(+). In terms of biological role, involved in the regulation of the intracellular balance of NAD and NADP, and is a key enzyme in the biosynthesis of NADP. Catalyzes specifically the phosphorylation on 2'-hydroxyl of the adenosine moiety of NAD to yield NADP. This Oceanobacillus iheyensis (strain DSM 14371 / CIP 107618 / JCM 11309 / KCTC 3954 / HTE831) protein is NAD kinase 2.